A 201-amino-acid chain; its full sequence is L-rhamnose-binding lectin SML (201 aa).

8 disulfide bridges follow: Cys-10-Cys-40, Cys-20-Cys-99, Cys-54-Cys-86, Cys-67-Cys-73, Cys-108-Cys-138, Cys-117-Cys-195, Cys-152-Cys-182, and Cys-163-Cys-169. SUEL-type lectin domains lie at 18-100 (LSCD…YNCF) and 107-196 (TCEH…YVCQ). N-linked (GlcNAc...) asparagine glycosylation is present at Asn-168.

As to quaternary structure, homodimer; non-covalently linked.

In terms of biological role, rhamnose-binding lectin. Also binds melibiose, raffinose, D-galactose, L-arabinose, D-fucose, maltose and D-glucose with decreasing affinity. Does not bind D-arabinose, L-fucose, lactose, xylose or 2-deoxy-D-galactose. Shows strong hemagglutinating activity against rabbit erythrocytes. This is L-rhamnose-binding lectin SML from Scomberomorus niphonius (Japanese Spanish mackerel).